We begin with the raw amino-acid sequence, 186 residues long: Elongation factor P (186 aa).

It belongs to the elongation factor P family.

The protein localises to the cytoplasm. The protein operates within protein biosynthesis; polypeptide chain elongation. Involved in peptide bond synthesis. Stimulates efficient translation and peptide-bond synthesis on native or reconstituted 70S ribosomes in vitro. Probably functions indirectly by altering the affinity of the ribosome for aminoacyl-tRNA, thus increasing their reactivity as acceptors for peptidyl transferase. The polypeptide is Elongation factor P (Elusimicrobium minutum (strain Pei191)).